The chain runs to 405 residues: Serpin I2 (405 aa).

The N-terminal stretch at 1–18 is a signal peptide; the sequence is MNKTILWSFLLFFSGSQT. The N-linked (GlcNAc...) asparagine glycan is linked to asparagine 306.

This sequence belongs to the serpin family. Expressed in pancreas.

The protein localises to the secreted. The chain is Serpin I2 (Serpini2) from Mus musculus (Mouse).